A 485-amino-acid chain; its full sequence is Adenosylhomocysteinase (485 aa).

3 residues coordinate substrate: threonine 64, aspartate 139, and glutamate 205. 206–208 (TTT) contributes to the NAD(+) binding site. 2 residues coordinate substrate: lysine 235 and aspartate 239. Residues asparagine 240, 269-274 (GYGDVG), glutamate 292, asparagine 327, 348-350 (IGH), and asparagine 397 contribute to the NAD(+) site.

The protein belongs to the adenosylhomocysteinase family. NAD(+) serves as cofactor.

The enzyme catalyses S-adenosyl-L-homocysteine + H2O = L-homocysteine + adenosine. The protein operates within amino-acid biosynthesis; L-homocysteine biosynthesis; L-homocysteine from S-adenosyl-L-homocysteine: step 1/1. Functionally, adenosylhomocysteine is a competitive inhibitor of S-adenosyl-L-methionine-dependent methyl transferase reactions; therefore adenosylhomocysteinase may play a key role in the control of methylations via regulation of the intracellular concentration of adenosylhomocysteine. This chain is Adenosylhomocysteinase (SAHH), found in Phalaenopsis sp. (Moth orchid).